The following is a 165-amino-acid chain: Austinoid biosynthesis cluster protein J (165 aa).

It belongs to the trt14 isomerase family. As to quaternary structure, homodimer.

It participates in secondary metabolite biosynthesis; terpenoid biosynthesis. Its function is as follows. Part of the gene cluster that mediates the biosynthesis of calidodehydroaustin, a fungal meroterpenoid. The first step of the pathway is the synthesis of 3,5-dimethylorsellinic acid by the polyketide synthase ausA. 3,5-dimethylorsellinic acid is then prenylated by the polyprenyl transferase ausN. Further epoxidation by the FAD-dependent monooxygenase ausM and cyclization by the probable terpene cyclase ausL lead to the formation of protoaustinoid A. Protoaustinoid A is then oxidized to spiro-lactone preaustinoid A3 by the combined action of the FAD-binding monooxygenases ausB and ausC, and the dioxygenase ausE. Acid-catalyzed keto-rearrangement and ring contraction of the tetraketide portion of preaustinoid A3 by ausJ lead to the formation of preaustinoid A4. The aldo-keto reductase ausK, with the help of ausH, is involved in the next step by transforming preaustinoid A4 into isoaustinone which is in turn hydroxylated by the P450 monooxygenase ausI to form austinolide. The cytochrome P450 monooxygenase ausG modifies austinolide to austinol. Austinol is further acetylated to austin by the O-acetyltransferase ausP, which spontaneously changes to dehydroaustin. The cytochrome P450 monooxygenase ausR then converts dehydroaustin is into 7-dehydrodehydroaustin. The hydroxylation catalyzed by ausR permits the O-acetyltransferase ausQ to add an additional acetyl group to the molecule, leading to the formation of acetoxydehydroaustin. The short chain dehydrogenase ausT catalyzes the reduction of the double bond present between carbon atoms 1 and 2 to convert 7-dehydrodehydroaustin into 1,2-dihydro-7-hydroxydehydroaustin. AusQ catalyzes not only an acetylation reaction but also the addition of the PKS ausV diketide product to 1,2-dihydro-7-hydroxydehydroaustin, forming precalidodehydroaustin. Finally, the iron/alpha-ketoglutarate-dependent dioxygenase converts precalidodehydroaustin into calidodehydroaustin. The protein is Austinoid biosynthesis cluster protein J of Aspergillus calidoustus.